We begin with the raw amino-acid sequence, 452 residues long: 1-aminocyclopropane-1-carboxylate synthase 3 (452 aa).

The residue at position 283 (Lys283) is an N6-(pyridoxal phosphate)lysine.

Belongs to the class-I pyridoxal-phosphate-dependent aminotransferase family. Requires pyridoxal 5'-phosphate as cofactor. Expressed in leaves. Expressed in roots and leaf blades. Expressed at low levels in leaf sheaths and shoot bases.

It catalyses the reaction S-adenosyl-L-methionine = 1-aminocyclopropane-1-carboxylate + S-methyl-5'-thioadenosine + H(+). It participates in alkene biosynthesis; ethylene biosynthesis via S-adenosyl-L-methionine; ethylene from S-adenosyl-L-methionine: step 1/2. Functionally, catalyzes the formation of 1-aminocyclopropane-1-carboxylate, a direct precursor of ethylene in higher plants. This Oryza sativa subsp. japonica (Rice) protein is 1-aminocyclopropane-1-carboxylate synthase 3.